The following is a 65-amino-acid chain: Trypsin inhibitor (65 aa).

Homotrimer.

This chain is Trypsin inhibitor, found in Zea mays (Maize).